Here is a 259-residue protein sequence, read N- to C-terminus: Major cell-binding factor (259 aa).

An N-terminal signal peptide occupies residues 1–26; that stretch reads MVFRKSLLKLAVFALGACVAFSNANA.

This sequence belongs to the bacterial solute-binding protein 3 family.

It localises to the cell surface. Functionally, common antigen and a major cell adherence molecule. Most probably involved, with PEB1C, in a binding-protein-dependent transport system for an amino acid. May be involved in binding to intestinal cells. The sequence is that of Major cell-binding factor (peb1A) from Campylobacter jejuni subsp. jejuni serotype O:2 (strain ATCC 700819 / NCTC 11168).